Consider the following 87-residue polypeptide: Phosphoribosyl-ATP pyrophosphatase (87 aa).

Belongs to the PRA-PH family.

Its subcellular location is the cytoplasm. The catalysed reaction is 1-(5-phospho-beta-D-ribosyl)-ATP + H2O = 1-(5-phospho-beta-D-ribosyl)-5'-AMP + diphosphate + H(+). It participates in amino-acid biosynthesis; L-histidine biosynthesis; L-histidine from 5-phospho-alpha-D-ribose 1-diphosphate: step 2/9. In Corynebacterium glutamicum (strain ATCC 13032 / DSM 20300 / JCM 1318 / BCRC 11384 / CCUG 27702 / LMG 3730 / NBRC 12168 / NCIMB 10025 / NRRL B-2784 / 534), this protein is Phosphoribosyl-ATP pyrophosphatase (hisE).